We begin with the raw amino-acid sequence, 94 residues long: Large ribosomal subunit protein eL42 (94 aa).

C11, C14, C71, and C74 together coordinate Zn(2+). The C4-type zinc finger occupies 11–74 (CPYCKRHTIH…LDLRFVCTVC (64 aa)).

This sequence belongs to the eukaryotic ribosomal protein eL42 family. Part of the 50S ribosomal subunit. Zn(2+) serves as cofactor.

Its function is as follows. Binds to the 23S rRNA. This Pyrococcus horikoshii (strain ATCC 700860 / DSM 12428 / JCM 9974 / NBRC 100139 / OT-3) protein is Large ribosomal subunit protein eL42.